A 224-amino-acid polypeptide reads, in one-letter code: Glycerol-3-phosphate acyltransferase (224 aa).

The next 6 helical transmembrane spans lie at 4-24, 60-80, 88-108, 124-144, 149-169, and 182-202; these read FVIV…GSIN, LVIF…VYFV, SVVV…FPIW, IISV…LIII, IVSF…FIPW, and WPWW…IWSH.

Belongs to the PlsY family. Probably interacts with PlsX.

The protein localises to the cell membrane. It catalyses the reaction an acyl phosphate + sn-glycerol 3-phosphate = a 1-acyl-sn-glycero-3-phosphate + phosphate. The protein operates within lipid metabolism; phospholipid metabolism. Catalyzes the transfer of an acyl group from acyl-phosphate (acyl-PO(4)) to glycerol-3-phosphate (G3P) to form lysophosphatidic acid (LPA). This enzyme utilizes acyl-phosphate as fatty acyl donor, but not acyl-CoA or acyl-ACP. The polypeptide is Glycerol-3-phosphate acyltransferase (Mycoplasmopsis pulmonis (strain UAB CTIP) (Mycoplasma pulmonis)).